The chain runs to 482 residues: tRNA sulfurtransferase (482 aa).

Positions 61-165 (PAIRDALTRI…NDRLLLVKGR (105 aa)) constitute a THUMP domain. ATP is bound by residues 183–184 (LI), Lys-265, Gly-287, and Gln-296. Cys-344 and Cys-456 are disulfide-bonded. In terms of domain architecture, Rhodanese spans 404 to 482 (FGANDAILDI…GFSNVKVYRP (79 aa)). Cys-456 (cysteine persulfide intermediate) is an active-site residue.

This sequence belongs to the ThiI family.

Its subcellular location is the cytoplasm. It carries out the reaction [ThiI sulfur-carrier protein]-S-sulfanyl-L-cysteine + a uridine in tRNA + 2 reduced [2Fe-2S]-[ferredoxin] + ATP + H(+) = [ThiI sulfur-carrier protein]-L-cysteine + a 4-thiouridine in tRNA + 2 oxidized [2Fe-2S]-[ferredoxin] + AMP + diphosphate. The catalysed reaction is [ThiS sulfur-carrier protein]-C-terminal Gly-Gly-AMP + S-sulfanyl-L-cysteinyl-[cysteine desulfurase] + AH2 = [ThiS sulfur-carrier protein]-C-terminal-Gly-aminoethanethioate + L-cysteinyl-[cysteine desulfurase] + A + AMP + 2 H(+). It participates in cofactor biosynthesis; thiamine diphosphate biosynthesis. Its function is as follows. Catalyzes the ATP-dependent transfer of a sulfur to tRNA to produce 4-thiouridine in position 8 of tRNAs, which functions as a near-UV photosensor. Also catalyzes the transfer of sulfur to the sulfur carrier protein ThiS, forming ThiS-thiocarboxylate. This is a step in the synthesis of thiazole, in the thiamine biosynthesis pathway. The sulfur is donated as persulfide by IscS. The sequence is that of tRNA sulfurtransferase from Klebsiella pneumoniae (strain 342).